The sequence spans 407 residues: Expansin-like protein 2 (407 aa).

The signal sequence occupies residues Met-1–Ser-23. One can recognise an Expansin-like EG45 domain in the interval His-42–Asn-141. Cystine bridges form between Cys-45-Cys-75 and Cys-78-Cys-136. Residues Asn-70, Asn-117, and Asn-387 are each glycosylated (N-linked (GlcNAc...) asparagine).

It belongs to the expansin family. Expansin A subfamily.

The protein resides in the secreted. Its function is as follows. Unlikely to encode with a protein with expansin activity. This chain is Expansin-like protein 2 (expl2), found in Dictyostelium discoideum (Social amoeba).